The following is a 1403-amino-acid chain: Sushi, nidogen and EGF-like domain-containing protein 1 (1403 aa).

An N-terminal signal peptide occupies residues 1–24 (MRRGAAWALLLAAALGLGARGVRA). The 156-residue stretch at 103–258 (AFWADVDNRR…GRWAFRIDDA (156 aa)) folds into the NIDO domain. 3 consecutive EGF-like domains span residues 268 to 309 (TTSV…RRCH), 311 to 347 (DVNECASHPCQNGGTCTHGVNSFSCQCPAGFQGPTCE), and 349 to 385 (AQSPCDNKVCQNGGQCQAESSSAVCVCQAGYTGATCE). Disulfide bonds link cysteine 272/cysteine 284, cysteine 278/cysteine 297, cysteine 299/cysteine 308, cysteine 315/cysteine 326, cysteine 320/cysteine 335, cysteine 337/cysteine 346, cysteine 353/cysteine 364, cysteine 358/cysteine 373, cysteine 375/cysteine 384, cysteine 391/cysteine 402, cysteine 396/cysteine 411, cysteine 413/cysteine 422, cysteine 433/cysteine 444, cysteine 438/cysteine 453, cysteine 455/cysteine 464, cysteine 472/cysteine 480, cysteine 474/cysteine 488, and cysteine 490/cysteine 499. Asparagine 292 carries N-linked (GlcNAc...) asparagine glycosylation. One can recognise an EGF-like 4; calcium-binding domain in the interval 387–423 (DVDECSSDPCLNGGSCVDLVGNYSCICVEPFEGPQCE). A glycan (N-linked (GlcNAc...) asparagine) is linked at asparagine 408. 2 EGF-like domains span residues 429–465 (VPSPCLSNPCLNGGTCVDADQGYVCECPEGFMGLDCR) and 468–500 (ILNDCDCRNGGRCLGANTTICQCPPGFFGLLCE). N-linked (GlcNAc...) asparagine glycosylation occurs at asparagine 484. An N-linked (GlcNAc...) asparagine glycan is attached at asparagine 536. 4 EGF-like domains span residues 541–577 (LPSPCDSDPCFNGGSCDAHEDSYTCECPRGFHGRHCE), 580–616 (RPHLCSSGPCRNGGTCKETGDEYRCTCPYRFTGRHCE), 619–655 (KPDSCASGPCHNGGTCFHYIGKYKCDCPPGFSGRHCE), and 657–693 (APSPCFRSPCMNGGICEDLGTDFSCHCQPGYTGHRCQ). Cystine bridges form between cysteine 545/cysteine 556, cysteine 550/cysteine 565, cysteine 567/cysteine 576, cysteine 584/cysteine 595, cysteine 589/cysteine 604, cysteine 606/cysteine 615, cysteine 623/cysteine 634, cysteine 628/cysteine 643, cysteine 645/cysteine 654, cysteine 661/cysteine 672, cysteine 666/cysteine 681, cysteine 683/cysteine 692, cysteine 698/cysteine 739, cysteine 724/cysteine 751, cysteine 757/cysteine 768, cysteine 762/cysteine 777, cysteine 779/cysteine 788, cysteine 795/cysteine 806, cysteine 800/cysteine 815, cysteine 817/cysteine 826, cysteine 833/cysteine 844, cysteine 838/cysteine 853, cysteine 855/cysteine 864, cysteine 871/cysteine 882, cysteine 876/cysteine 891, and cysteine 893/cysteine 902. A Sushi domain is found at 696–753 (VDCGQPEEVKHATMRLNGTRMGSVALYTCDPGFSLSVLSHMRVCQPQGVWSQPPQCIE). Asparagine 712 is a glycosylation site (N-linked (GlcNAc...) asparagine). An EGF-like 11; calcium-binding domain is found at 753-789 (EVDECQSQPCLHKGSCQDLIAGYQCLCSPGYEGVHCE). The region spanning 791–827 (ETDECQAQPCRNGGSCRDLPGAFICQCPEGFVGTHCE) is the EGF-like 12; calcium-binding domain. EGF-like domains follow at residues 829–865 (EVDACASSPCQHGGRCEDGGGAYLCVCPEGFFGYNCE) and 867–903 (VSDPCFSSPCGGRGYCLASNGSHSCTCKVGYTGKDCT). An N-linked (GlcNAc...) asparagine glycan is attached at asparagine 886. Fibronectin type-III domains lie at 908–1006 (PPTA…TRPR), 1007–1105 (PIED…TRPL), and 1106–1200 (PPAN…SPRD). N-linked (GlcNAc...) asparagine glycans are attached at residues asparagine 977, asparagine 1015, asparagine 1109, asparagine 1139, and asparagine 1298. The segment at 1295–1314 (LPKNNSKDTESTPGSCSEDT) is disordered. Residues 1305 to 1314 (STPGSCSEDT) are compositionally biased toward polar residues. Positions 1306–1342 (TPGSCSEDTCQNGGTCVPGANAHSCDCRPGFKGRHCE) constitute an EGF-like 15 domain. Cystine bridges form between cysteine 1310–cysteine 1321, cysteine 1315–cysteine 1330, and cysteine 1332–cysteine 1341.

In terms of processing, phosphorylated on serine and threonine residues. N-glycosylated. Expressed in liver.

It localises to the secreted. The protein resides in the extracellular space. It is found in the extracellular matrix. The sequence is that of Sushi, nidogen and EGF-like domain-containing protein 1 from Rattus norvegicus (Rat).